Here is a 465-residue protein sequence, read N- to C-terminus: Protein hedgehog (465 aa).

Cys79 carries the N-palmitoyl cysteine lipid modification. 7 residues coordinate Ca(2+): Glu143, Glu144, Asp149, Thr179, Glu180, Asp183, and Asp185. A lipid anchor (Cholesterol glycine ester) is attached at Gly251.

It belongs to the hedgehog family. Interacts with shf. The C-terminal part of the hedgehog protein precursor displays an autoproteolysis activity that results in the cleavage of the full-length protein into two parts (N-product and C-product). In addition, the C-terminal part displays a cholesterol transferase activity that results by the covalent attachment of a cholesterol moiety to the C-terminal of the newly generated N-product. The N-product is the active species in both local and long-range signaling, whereas the C-product has no signaling activity. Post-translationally, cholesterylation is required for N-product targeting to lipid rafts and multimerization. In terms of processing, N-palmitoylation by Rasp of the hedgehog N-product, within the secretory pathway, is required for the embryonic and larval patterning activities of the hedgehog signal.

It is found in the nucleus. The protein resides in the cytoplasm. The protein localises to the cell membrane. It carries out the reaction glycyl-L-cysteinyl-[protein] + cholesterol + H(+) = [protein]-C-terminal glycyl cholesterol ester + N-terminal L-cysteinyl-[protein]. Its function is as follows. The C-terminal part of the hedgehog protein precursor displays an autoproteolysis activity that results in the cleavage of the full-length protein into two parts (N-product and C-product). In addition, the C-terminal part displays a cholesterol transferase activity that results by the covalent attachment of a cholesterol moiety to the C-terminal of the newly generated N-product. Once cleaved, the C-product has no signaling activity and diffuses from the cell. In terms of biological role, the dually lipidated hedgehog protein N-product is a morphogen which is essential for a variety of patterning events during development. Establishes the anterior-posterior axis of the embryonic segments and patterns the larval imaginal disks. Binds to the patched (ptc) receptor, which functions in association with smoothened (smo), to activate the transcription of target genes wingless (wg), decapentaplegic (dpp) and ptc. In the absence of hh, ptc represses the constitutive signaling activity of smo through fused (fu). Essential component of a signaling pathway which regulates the Duox-dependent gut immune response to bacterial uracil; required to activate Cad99C-dependent endosome formation, norpA-dependent Ca2+ mobilization and p38 MAPK, which are essential steps in the Duox-dependent production of reactive oxygen species (ROS) in response to intestinal bacterial infection. During photoreceptor differentiation, it up-regulates transcription of Ubr3, which in turn promotes the hh-signaling pathway by mediating the ubiquitination and degradation of cos. This chain is Protein hedgehog, found in Drosophila erecta (Fruit fly).